Reading from the N-terminus, the 312-residue chain is Ribosomal RNA small subunit methyltransferase H (312 aa).

S-adenosyl-L-methionine contacts are provided by residues 34-36 (GGH), Asp-54, Phe-81, Asp-102, and Gln-109.

It belongs to the methyltransferase superfamily. RsmH family.

It is found in the cytoplasm. It carries out the reaction cytidine(1402) in 16S rRNA + S-adenosyl-L-methionine = N(4)-methylcytidine(1402) in 16S rRNA + S-adenosyl-L-homocysteine + H(+). Specifically methylates the N4 position of cytidine in position 1402 (C1402) of 16S rRNA. This Geotalea uraniireducens (strain Rf4) (Geobacter uraniireducens) protein is Ribosomal RNA small subunit methyltransferase H.